Here is a 282-residue protein sequence, read N- to C-terminus: Lipoyl synthase (282 aa).

Cysteine 37, cysteine 42, cysteine 48, cysteine 63, cysteine 67, cysteine 70, and serine 274 together coordinate [4Fe-4S] cluster. Positions 49–263 constitute a Radical SAM core domain; it reads WGKGTATFMI…KTIGLEKGFS (215 aa).

This sequence belongs to the radical SAM superfamily. Lipoyl synthase family. [4Fe-4S] cluster is required as a cofactor.

The protein localises to the cytoplasm. The enzyme catalyses [[Fe-S] cluster scaffold protein carrying a second [4Fe-4S](2+) cluster] + N(6)-octanoyl-L-lysyl-[protein] + 2 oxidized [2Fe-2S]-[ferredoxin] + 2 S-adenosyl-L-methionine + 4 H(+) = [[Fe-S] cluster scaffold protein] + N(6)-[(R)-dihydrolipoyl]-L-lysyl-[protein] + 4 Fe(3+) + 2 hydrogen sulfide + 2 5'-deoxyadenosine + 2 L-methionine + 2 reduced [2Fe-2S]-[ferredoxin]. It functions in the pathway protein modification; protein lipoylation via endogenous pathway; protein N(6)-(lipoyl)lysine from octanoyl-[acyl-carrier-protein]: step 2/2. Catalyzes the radical-mediated insertion of two sulfur atoms into the C-6 and C-8 positions of the octanoyl moiety bound to the lipoyl domains of lipoate-dependent enzymes, thereby converting the octanoylated domains into lipoylated derivatives. This chain is Lipoyl synthase, found in Bacteroides thetaiotaomicron (strain ATCC 29148 / DSM 2079 / JCM 5827 / CCUG 10774 / NCTC 10582 / VPI-5482 / E50).